Here is a 394-residue protein sequence, read N- to C-terminus: Elongation factor Tu (394 aa).

Residues 10–204 form the tr-type G domain; it reads KPHVNIGTIG…AVDSYIPQPV (195 aa). Residues 19–26 are G1; sequence GHVDHGKT. 19 to 26 lines the GTP pocket; that stretch reads GHVDHGKT. T26 is a Mg(2+) binding site. The segment at 60 to 64 is G2; it reads GITIS. Residues 81–84 are G3; the sequence is DCPG. GTP is bound by residues 81-85 and 136-139; these read DCPGH and NKVD. Positions 136-139 are G4; it reads NKVD. The interval 174-176 is G5; that stretch reads SAL.

Belongs to the TRAFAC class translation factor GTPase superfamily. Classic translation factor GTPase family. EF-Tu/EF-1A subfamily. Monomer.

Its subcellular location is the cytoplasm. It catalyses the reaction GTP + H2O = GDP + phosphate + H(+). Functionally, GTP hydrolase that promotes the GTP-dependent binding of aminoacyl-tRNA to the A-site of ribosomes during protein biosynthesis. The chain is Elongation factor Tu from Rickettsia felis (strain ATCC VR-1525 / URRWXCal2) (Rickettsia azadi).